Consider the following 251-residue polypeptide: tRNA pseudouridine synthase A (251 aa).

Aspartate 54 (nucleophile) is an active-site residue. Tyrosine 111 provides a ligand contact to substrate.

It belongs to the tRNA pseudouridine synthase TruA family. Homodimer.

The enzyme catalyses uridine(38/39/40) in tRNA = pseudouridine(38/39/40) in tRNA. Formation of pseudouridine at positions 38, 39 and 40 in the anticodon stem and loop of transfer RNAs. This is tRNA pseudouridine synthase A from Mycoplasma mycoides subsp. mycoides SC (strain CCUG 32753 / NCTC 10114 / PG1).